A 141-amino-acid polypeptide reads, in one-letter code: Deoxyuridine 5'-triphosphate nucleotidohydrolase (141 aa).

The protein belongs to the dUTPase family. Mg(2+) serves as cofactor.

The catalysed reaction is dUTP + H2O = dUMP + diphosphate + H(+). Its pathway is pyrimidine metabolism; dUMP biosynthesis; dUMP from dCTP (dUTP route): step 2/2. This enzyme is involved in nucleotide metabolism: it produces dUMP, the immediate precursor of thymidine nucleotides and it decreases the intracellular concentration of dUTP so that uracil cannot be incorporated into DNA. In Chlorella (PBCV-1), this protein is Deoxyuridine 5'-triphosphate nucleotidohydrolase.